A 339-amino-acid polypeptide reads, in one-letter code: Ketol-acid reductoisomerase (NADP(+)) (339 aa).

The region spanning 1–182 (MRVYYDRDAD…GGGRAGIIET (182 aa)) is the KARI N-terminal Rossmann domain. Residues 24 to 27 (YGSQ), Arg48, Ser51, and 83 to 86 (DEGQ) contribute to the NADP(+) site. The active site involves His108. Residue Gly134 participates in NADP(+) binding. In terms of domain architecture, KARI C-terminal knotted spans 183 to 328 (SFKEEVETDL…EKLRGMMPWI (146 aa)). Residues Asp191, Glu195, Glu227, and Glu231 each contribute to the Mg(2+) site. Ser252 provides a ligand contact to substrate.

It belongs to the ketol-acid reductoisomerase family. Requires Mg(2+) as cofactor.

The enzyme catalyses (2R)-2,3-dihydroxy-3-methylbutanoate + NADP(+) = (2S)-2-acetolactate + NADPH + H(+). The catalysed reaction is (2R,3R)-2,3-dihydroxy-3-methylpentanoate + NADP(+) = (S)-2-ethyl-2-hydroxy-3-oxobutanoate + NADPH + H(+). It functions in the pathway amino-acid biosynthesis; L-isoleucine biosynthesis; L-isoleucine from 2-oxobutanoate: step 2/4. The protein operates within amino-acid biosynthesis; L-valine biosynthesis; L-valine from pyruvate: step 2/4. In terms of biological role, involved in the biosynthesis of branched-chain amino acids (BCAA). Catalyzes an alkyl-migration followed by a ketol-acid reduction of (S)-2-acetolactate (S2AL) to yield (R)-2,3-dihydroxy-isovalerate. In the isomerase reaction, S2AL is rearranged via a Mg-dependent methyl migration to produce 3-hydroxy-3-methyl-2-ketobutyrate (HMKB). In the reductase reaction, this 2-ketoacid undergoes a metal-dependent reduction by NADPH to yield (R)-2,3-dihydroxy-isovalerate. The protein is Ketol-acid reductoisomerase (NADP(+)) of Gluconacetobacter diazotrophicus (strain ATCC 49037 / DSM 5601 / CCUG 37298 / CIP 103539 / LMG 7603 / PAl5).